The following is a 71-amino-acid chain: Defensin-like protein 292 (71 aa).

3 cysteine pairs are disulfide-bonded: Cys44–Cys64, Cys50–Cys69, and Cys56–Cys71.

Belongs to the DEFL family.

This chain is Defensin-like protein 292, found in Arabidopsis thaliana (Mouse-ear cress).